A 425-amino-acid chain; its full sequence is LLSITTTHIHAFKPLPISFDDFSDLNRSCFAPGFVFGTASSAFQYEGAAFEDGKGPSIWDTFTHKYPEKIKDRTNGDVAIDEYHRYKEDIGIMKDMNLDAYRFSISWPRVLPKGKLSGGVNREGINYYNNLINEVLANGMQPYVTLFHWDVPQALEDEYRGFLGRNIVDDFRDYAELCFKEFGDRVKHWITLNEPWGVSMNAYAYGTFAPGRCSDWLKLNCTGGDSGREPYLAAHYQLLAHAAAARLYKTKYQASQNGIIGITLVSHWFEPASKEKADVDAAKRGLDFMLGWFMHPLTKGRYPESMRYLVRKRLPKFSTEESKELTGSFDFLGLNYYSSYYAAKAPRIPNARPAIQTDSLINATFEHNGKPLGPMAASSWLCIYPQGIRKLLLYVKNHYNNPVIYITENGRNSSTINTVTSRIPF.

The N-terminal stretch at leucine 1–alanine 11 is a signal peptide. Residues glutamine 44, histidine 148, and asparagine 193–glutamate 194 contribute to the a beta-D-glucoside site. The active-site Proton donor is the glutamate 194. A disulfide bond links cysteine 213 and cysteine 221. An N-linked (GlcNAc...) asparagine glycan is attached at asparagine 220. Tyrosine 337 and glutamate 408 together coordinate a beta-D-glucoside. Catalysis depends on glutamate 408, which acts as the Nucleophile. Asparagine 412 is a glycosylation site (N-linked (GlcNAc...) asparagine).

It belongs to the glycosyl hydrolase 1 family. In terms of assembly, homodimer. Leaves.

The catalysed reaction is Hydrolysis of terminal, non-reducing beta-D-glucosyl residues with release of beta-D-glucose.. Functionally, hydrolyzes cyanoglucosides, contributing to the release of hydrocyanic acid, which functions as a defense mechanism against small predators, when the leaf tissue is damaged. In Trifolium repens (Creeping white clover), this protein is Cyanogenic beta-glucosidase (LI).